A 496-amino-acid polypeptide reads, in one-letter code: Trimethylamine methyltransferase MttB (496 aa).

Pyl-331 is a non-standard amino acid (pyrrolysine).

This sequence belongs to the trimethylamine methyltransferase family.

It catalyses the reaction Co(I)-[trimethylamine-specific corrinoid protein] + trimethylamine + H(+) = methyl-Co(III)-[trimethylamine-specific corrinoid protein] + dimethylamine. Its function is as follows. Catalyzes the transfer of a methyl group from trimethylamine to the corrinoid cofactor of MttC. This Desulfitobacterium hafniense (strain DSM 10664 / DCB-2) protein is Trimethylamine methyltransferase MttB.